Reading from the N-terminus, the 245-residue chain is 1-(5-phosphoribosyl)-5-[(5-phosphoribosylamino)methylideneamino] imidazole-4-carboxamide isomerase (245 aa).

The active-site Proton acceptor is the Asp8. Catalysis depends on Asp130, which acts as the Proton donor.

It belongs to the HisA/HisF family.

It localises to the cytoplasm. It catalyses the reaction 1-(5-phospho-beta-D-ribosyl)-5-[(5-phospho-beta-D-ribosylamino)methylideneamino]imidazole-4-carboxamide = 5-[(5-phospho-1-deoxy-D-ribulos-1-ylimino)methylamino]-1-(5-phospho-beta-D-ribosyl)imidazole-4-carboxamide. Its pathway is amino-acid biosynthesis; L-histidine biosynthesis; L-histidine from 5-phospho-alpha-D-ribose 1-diphosphate: step 4/9. The protein is 1-(5-phosphoribosyl)-5-[(5-phosphoribosylamino)methylideneamino] imidazole-4-carboxamide isomerase of Pseudomonas putida (strain ATCC 700007 / DSM 6899 / JCM 31910 / BCRC 17059 / LMG 24140 / F1).